The following is a 384-amino-acid chain: Tryptophan--tRNA ligase (384 aa).

The short motif at 81–89 (PSGPMHIGH) is the 'HIGH' region element. A 'KMSKS' region motif is present at residues 252–256 (KMSAS).

This sequence belongs to the class-I aminoacyl-tRNA synthetase family.

It localises to the cytoplasm. It carries out the reaction tRNA(Trp) + L-tryptophan + ATP = L-tryptophyl-tRNA(Trp) + AMP + diphosphate + H(+). This Thermococcus onnurineus (strain NA1) protein is Tryptophan--tRNA ligase.